The chain runs to 304 residues: ADP-polyphosphate phosphotransferase (304 aa).

Belongs to the polyphosphate kinase 2 (PPK2) family. Class I subfamily.

It carries out the reaction [phosphate](n) + ATP = [phosphate](n+1) + ADP. In terms of biological role, uses inorganic polyphosphate (polyP) as a donor to convert ADP to ATP. The protein is ADP-polyphosphate phosphotransferase of Pseudomonas aeruginosa (strain ATCC 15692 / DSM 22644 / CIP 104116 / JCM 14847 / LMG 12228 / 1C / PRS 101 / PAO1).